The sequence spans 313 residues: uncharacterized protein (313 aa).

Helical transmembrane passes span 41-61, 68-88, and 102-122; these read LAGTMILSVLSSPALVSGLMV, VHSVLFPIPIFFSINQLFHYF, and QLLLFLISHFLLLLVLTKLVL.

Belongs to the cytochrome b family.

It localises to the mitochondrion membrane. This is an uncharacterized protein from Arabidopsis thaliana (Mouse-ear cress).